Consider the following 498-residue polypeptide: Phenylalanine--tRNA ligase alpha subunit (498 aa).

L-phenylalanine contacts are provided by residues threonine 328, 372 to 374 (QVE), and tyrosine 412. Glutamate 414 provides a ligand contact to Mg(2+). Phenylalanine 438 serves as a coordination point for L-phenylalanine.

This sequence belongs to the class-II aminoacyl-tRNA synthetase family. Phe-tRNA synthetase alpha subunit type 2 subfamily. In terms of assembly, tetramer of two alpha and two beta subunits. It depends on Mg(2+) as a cofactor.

It is found in the cytoplasm. It carries out the reaction tRNA(Phe) + L-phenylalanine + ATP = L-phenylalanyl-tRNA(Phe) + AMP + diphosphate + H(+). This is Phenylalanine--tRNA ligase alpha subunit from Drosophila melanogaster (Fruit fly).